Reading from the N-terminus, the 736-residue chain is Catalase-peroxidase 2 (736 aa).

An N-terminal signal peptide occupies residues 1–23 (MIKKTLPVLILLALSGSFSTAVA). Positions 102 to 223 (WHGAGTYRTY…LAATQMGLIY (122 aa)) form a cross-link, tryptophyl-tyrosyl-methioninium (Trp-Tyr) (with M-249). Residue His-103 is the Proton acceptor of the active site. A cross-link (tryptophyl-tyrosyl-methioninium (Tyr-Met) (with W-102)) is located at residues 223 to 249 (YVNPEGPGGKPDPLASAKDIREAFSRM). His-264 is a heme b binding site.

Belongs to the peroxidase family. Peroxidase/catalase subfamily. Homodimer or homotetramer. The cofactor is heme b. In terms of processing, formation of the three residue Trp-Tyr-Met cross-link is important for the catalase, but not the peroxidase activity of the enzyme.

The protein localises to the periplasm. The catalysed reaction is H2O2 + AH2 = A + 2 H2O. The enzyme catalyses 2 H2O2 = O2 + 2 H2O. Functionally, bifunctional enzyme with both catalase and broad-spectrum peroxidase activity. The chain is Catalase-peroxidase 2 from Escherichia coli O157:H7.